Consider the following 107-residue polypeptide: SH3 domain-binding glutamic acid-rich-like protein 2 (107 aa).

Residues 61–67 carry the SH3-binding motif; it reads QGNPLPP.

It belongs to the SH3BGR family.

It localises to the nucleus. The polypeptide is SH3 domain-binding glutamic acid-rich-like protein 2 (SH3BGRL2) (Bos taurus (Bovine)).